The primary structure comprises 551 residues: Scaffold protein OPG125 (551 aa).

The protein belongs to the orthopoxvirus protein OPG125 family. In terms of assembly, homotrimer. Self-assembles to form a layer. Interacts with OPG158 (via N-terminus); this interaction is necessary for OPG125 association with membranes.

Its subcellular location is the membrane. Its function is as follows. Scaffold protein which forms a transitory spherical honeycomb lattice providing curvature and rigidity to the convex membrane of crescent and immature virions (IV). This association occurs concomitantly with viral membrane formation. Targeted by the drug rifampicin, which prevents the formation of this lattice, and hence virus morphogenesis. In the presence of rifampicin, irregularly shaped membranes that lack the honeycomb layer accumulate around areas of electron-dense viroplasm. This layer is lost from virions during maturation from IV to mature virion (MV), through the proteolysis of OPG158 N-terminus. The sequence is that of Scaffold protein OPG125 (OPG125) from Vaccinia virus (strain Ankara) (VACV).